Reading from the N-terminus, the 544-residue chain is Chaperonin GroEL (544 aa).

Residues 29–32 (TLGP), Lys-50, 86–90 (DGTTT), Gly-414, and Asp-494 contribute to the ATP site.

It belongs to the chaperonin (HSP60) family. In terms of assembly, forms a cylinder of 14 subunits composed of two heptameric rings stacked back-to-back. Interacts with the co-chaperonin GroES.

Its subcellular location is the cytoplasm. It carries out the reaction ATP + H2O + a folded polypeptide = ADP + phosphate + an unfolded polypeptide.. In terms of biological role, together with its co-chaperonin GroES, plays an essential role in assisting protein folding. The GroEL-GroES system forms a nano-cage that allows encapsulation of the non-native substrate proteins and provides a physical environment optimized to promote and accelerate protein folding. This is Chaperonin GroEL from Amoebophilus asiaticus (strain 5a2).